The primary structure comprises 475 residues: Transcription factor EB (475 aa).

The tract at residues 1 to 52 (MASRIGLRMQLMREQAQQEEQRERMQQQAVMHYMQQQQQQQQQLGGPPTPAI) is disordered. The interval 1-166 (MASRIGLRMQ…DDVIDNIMRL (166 aa)) is interaction with ACSS2. Residues 26-43 (QQQAVMHYMQQQQQQQQQ) are compositionally biased toward low complexity. Residues Ser108, Ser113, Ser121, and Ser137 each carry the phosphoserine modification. Positions 135 to 152 (GNSAPNSPMAMLHISSNP) match the Nuclear export signal motif. At Ser141 the chain carries Phosphoserine; by MTOR. The segment at 155 to 164 (EFDDVIDNIM) is strong transcription activation domain. Position 182 is a phosphothreonine (Thr182). Ser210 carries the phosphoserine; by MTOR modification. Position 211 is an S-(2,3-dicarboxypropyl)cysteine (Cys211). One can recognise a bHLH domain in the interval 234-287 (QKKDNHNLIERRRRFNINDRIKELGMLIPKANDLDVRWNKGTILKASVDYIRRM). Residues 244–247 (RRRR) carry the Nuclear localization signal motif. Positions 297-318 (LENHSRRLEMTNKQLWLRIQEL) are leucine-zipper. Ser331 is subject to Phosphoserine. Residues 351–429 (SEDGPGEALM…HGSPFPNLSK (79 aa)) are disordered. Over residues 380–389 (LPSAAQPQSP) the composition is skewed to low complexity. 5 positions are modified to phosphoserine: Ser422, Ser440, Ser465, Ser466, and Ser468. Low complexity predominate over residues 445-468 (ASDPLFSTMSPEASKASSRRSSFS). Residues 445-475 (ASDPLFSTMSPEASKASSRRSSFSMEEGDVL) are disordered.

This sequence belongs to the MiT/TFE family. As to quaternary structure, homodimer and heterodimer; with TFE3 or MITF. Interacts (when phosphorylated by MTOR) with YWHAZ; promoting retention in the cytosol. Interacts with Irgm1; promoting association between TFEB and PPP3CB and dephosphorylation. Interacts with small GTPases Rag (RagA/RRAGA, RagB/RRAGB, RagC/RRAGC and/or RagD/RRAGD); promoting its recruitment to lysosomal membrane in the presence of nutrients. Interacts with ACSS2. Phosphorylation at Ser-210 by MTOR via non-canonical mTORC1 pathway regulates its subcellular location and activity. When nutrients are present, phosphorylation by MTOR promotes association with 14-3-3/YWHA adapters and retention in the cytosol. Inhibition of mTORC1, starvation and lysosomal disruption, promotes dephosphorylation by calcineurin PPP3CB and translocation to the nucleus. Dephosphorylated by calcineurin PPP3CB in response to lysosomal Ca(2+) release. Irgm1 promotes dephosphorylation by calcineurin PPP3CB, resulting in TFEB nuclear translocation and stimulation of lysosomal biogenesis. Exported from the nucleus in a mTORC1-dependent manner in response to nutrient availability. Post-translationally, alkylated via a non-enzymatic covalent modification. Itaconate, an anti-inflammatory metabolite generated in response to lipopolysaccharide, alkylates Cys-211, preventing association with 14-3-3/YWHA adapters, thereby promoting nuclear translocation and activity. In terms of processing, sumoylated; does not affect dimerization with MITF. Widely expressed.

The protein localises to the nucleus. The protein resides in the cytoplasm. It is found in the cytosol. Its subcellular location is the lysosome membrane. Its function is as follows. Transcription factor that acts as a master regulator of lysosomal biogenesis, autophagy, lysosomal exocytosis, lipid catabolism, energy metabolism and immune response. Specifically recognizes and binds E-box sequences (5'-CANNTG-3'); efficient DNA-binding requires dimerization with itself or with another MiT/TFE family member such as TFE3 or MITF. Involved in the cellular response to amino acid availability by acting downstream of MTOR: in the presence of nutrients, TFEB phosphorylation by MTOR promotes its cytosolic retention and subsequent inactivation. Upon starvation or lysosomal stress, inhibition of MTOR induces TFEB dephosphorylation, resulting in nuclear localization and transcription factor activity. Specifically recognizes and binds the CLEAR-box sequence (5'-GTCACGTGAC-3') present in the regulatory region of many lysosomal genes, leading to activate their expression, thereby playing a central role in expression of lysosomal genes. Regulates lysosomal positioning in response to nutrient deprivation by promoting the expression of PIP4P1. Acts as a positive regulator of autophagy by promoting expression of genes involved in autophagy. In association with TFE3, activates the expression of CD40L in T-cells, thereby playing a role in T-cell-dependent antibody responses in activated CD4(+) T-cells and thymus-dependent humoral immunity. Specifically recognizes the gamma-E3 box, a subset of E-boxes, present in the heavy-chain immunoglobulin enhancer. Plays a role in the signal transduction processes required for normal vascularization of the placenta. Involved in the immune response to infection by the bacteria S.aureus, S.typhimurium or S.enterica. Infection promotes itaconate production, leading to alkylation, resulting in nuclear localization and transcription factor activity. Itaconate-mediated alkylation activates TFEB-dependent lysosomal biogenesis, facilitating the bacteria clearance during the antibacterial innate immune response. In association with ACSS2, promotes the expression of genes involved in lysosome biogenesis and both autophagy upon glucose deprivation. The polypeptide is Transcription factor EB (Mus musculus (Mouse)).